The chain runs to 3859 residues: Transformation/transcription domain-associated protein (3859 aa).

At Ala2 the chain carries N-acetylalanine. Residues 491 to 526 (PAAPGPAPSPAPVPAPPPPPPPPPPATPVTPAPVPP) show a composition bias toward pro residues. Residues 491–541 (PAAPGPAPSPAPVPAPPPPPPPPPPATPVTPAPVPPFEKQGEKDKEDKQTF) are disordered. The span at 529 to 539 (KQGEKDKEDKQ) shows a compositional bias: basic and acidic residues. A Phosphoserine modification is found at Ser1628. Residues 2010 to 2388 (SEVVIKWELQ…SPMAANQTPT (379 aa)) are interaction with TP53. The disordered stretch occupies residues 2023–2044 (DQQPDSDMDPNSSGEGVNSVSS). Low complexity predominate over residues 2033-2044 (NSSGEGVNSVSS). A Bipartite nuclear localization signal motif is present at residues 2047-2062 (KRGLSVDSAQEVKRFR). Ser2051 and Ser2077 each carry phosphoserine. Lys2543 participates in a covalent cross-link: Glycyl lysine isopeptide (Lys-Gly) (interchain with G-Cter in SUMO2). Positions 2543 to 2554 (KQEPRERENSES) are enriched in basic and acidic residues. Residues 2543 to 2578 (KQEPRERENSESKEEDVEIDIELAPGDQTSTPKTKE) are disordered. Positions 2692–3275 (VLKYLGKTHN…YFPIRTLYLT (584 aa)) constitute an FAT domain. Lys3078 carries the N6-acetyllysine modification. In terms of domain architecture, PI3K/PI4K catalytic spans 3500–3823 (MPRVEIVQKH…AVTAIMTRLH (324 aa)). The segment at 3506–3512 (VQKHNTA) is G-loop. The segment at 3687–3695 (HLNRLNPEM) is catalytic loop. The segment at 3707–3732 (VAYFRFDINDATGDLDANRPVPFRLT) is activation loop. In terms of domain architecture, FATC spans 3827–3859 (QFEGGESKVNTLVAAANSLDNLCRMDPAWHPWL).

It belongs to the PI3/PI4-kinase family. TRA1 subfamily. In terms of assembly, interacts with MYC, E2F1 and E2F4 transcription factors. Interacts directly with p53/TP53. Interacts with GCN5L2. Component of various HAT complexes. Component of the PCAF complex, at least composed of TADA2L/ADA2, SUPT3H, TADA3L/ADA3, TAF5L/PAF65-beta, TAF6L/PAF65-alpha, TAF10/TAFII30, TAF12/TAFII20, TAF9/TAFII31 and TRRAP. Component of the TFTC-HAT complex, at least composed of TAF5L, TAF6L, TADA3L, SUPT3H/SPT3, TAF2/TAFII150, TAF4/TAFII135, TAF5/TAFII100, GCN5L2/GCN5, TAF10 and TRRAP. Component of the NuA4 histone acetyltransferase complex which contains the catalytic subunit KAT5/TIP60 and the subunits EP400, TRRAP/PAF400, BRD8/SMAP, EPC1, DMAP1/DNMAP1, RUVBL1/TIP49, RUVBL2, ING3, actin, ACTL6A/BAF53A, MORF4L1/MRG15, MORF4L2/MRGX, MRGBP, YEATS4/GAS41, VPS72/YL1 and MEAF6. Component of the STAGA complex, at least composed of SUPT3H, GCN5L2, SUPT7L, TAF5L, TAF6L, TADA3L, TAD1L, TAF10, TAF12, TRRAP and TAF9. The STAGA core complex is associated with a subcomplex required for histone deubiquitination composed of ATXN7L3, ENY2 and USP22. Component of the BAF53 complex, at least composed of BAF53A, RUVBL1, SMARCA4/BRG1, and TRRAP, which preferentially acetylates histone H4 (and H2A) within nucleosomes. Interacts with NPAT. Interaction with TELO2 and TTI1. Component of a SWR1-like complex.

Its subcellular location is the nucleus. Its function is as follows. Adapter protein, which is found in various multiprotein chromatin complexes with histone acetyltransferase activity (HAT), which gives a specific tag for epigenetic transcription activation. Component of the NuA4 histone acetyltransferase complex which is responsible for acetylation of nucleosomal histones H4 and H2A. Plays a central role in MYC transcription activation, and also participates in cell transformation by MYC. Required for p53/TP53-, E2F1- and E2F4-mediated transcription activation. Also involved in transcription activation mediated by the adenovirus E1A, a viral oncoprotein that deregulates transcription of key genes. Probably acts by linking transcription factors such as E1A, MYC or E2F1 to HAT complexes such as STAGA thereby allowing transcription activation. Probably not required in the steps following histone acetylation in processes of transcription activation. May be required for the mitotic checkpoint and normal cell cycle progression. Component of a SWR1-like complex that specifically mediates the removal of histone H2A.Z/H2AZ1 from the nucleosome. May play a role in the formation and maintenance of the auditory system. The sequence is that of Transformation/transcription domain-associated protein (TRRAP) from Homo sapiens (Human).